Here is a 1070-residue protein sequence, read N- to C-terminus: DNA-directed RNA polymerase subunit beta (1070 aa).

It belongs to the RNA polymerase beta chain family. In plastids the minimal PEP RNA polymerase catalytic core is composed of four subunits: alpha, beta, beta', and beta''. When a (nuclear-encoded) sigma factor is associated with the core the holoenzyme is formed, which can initiate transcription.

It is found in the plastid. It localises to the chloroplast. It carries out the reaction RNA(n) + a ribonucleoside 5'-triphosphate = RNA(n+1) + diphosphate. DNA-dependent RNA polymerase catalyzes the transcription of DNA into RNA using the four ribonucleoside triphosphates as substrates. The protein is DNA-directed RNA polymerase subunit beta of Morus indica (Mulberry).